The following is a 144-amino-acid chain: 3-hydroxyacyl-[acyl-carrier-protein] dehydratase FabZ (144 aa).

The active site involves His-48.

Belongs to the thioester dehydratase family. FabZ subfamily.

The protein localises to the cytoplasm. It catalyses the reaction a (3R)-hydroxyacyl-[ACP] = a (2E)-enoyl-[ACP] + H2O. In terms of biological role, involved in unsaturated fatty acids biosynthesis. Catalyzes the dehydration of short chain beta-hydroxyacyl-ACPs and long chain saturated and unsaturated beta-hydroxyacyl-ACPs. The chain is 3-hydroxyacyl-[acyl-carrier-protein] dehydratase FabZ from Bacillus cereus (strain AH187).